We begin with the raw amino-acid sequence, 652 residues long: Threonine--tRNA ligase (652 aa).

The TGS domain maps to Met1–Thr61. The segment at Asp243 to Pro548 is catalytic. Zn(2+)-binding residues include Cys348, His399, and His525.

It belongs to the class-II aminoacyl-tRNA synthetase family. In terms of assembly, homodimer. The cofactor is Zn(2+).

Its subcellular location is the cytoplasm. It catalyses the reaction tRNA(Thr) + L-threonine + ATP = L-threonyl-tRNA(Thr) + AMP + diphosphate + H(+). In terms of biological role, catalyzes the attachment of threonine to tRNA(Thr) in a two-step reaction: L-threonine is first activated by ATP to form Thr-AMP and then transferred to the acceptor end of tRNA(Thr). Also edits incorrectly charged L-seryl-tRNA(Thr). The polypeptide is Threonine--tRNA ligase (Parvibaculum lavamentivorans (strain DS-1 / DSM 13023 / NCIMB 13966)).